We begin with the raw amino-acid sequence, 57 residues long: uncharacterized protein (57 aa).

Positions 34-57 (QGKRGETEGQIEISRKAGHPAPAF) are disordered.

This is an uncharacterized protein from Saccharomyces cerevisiae (strain ATCC 204508 / S288c) (Baker's yeast).